The chain runs to 96 residues: MDALKEVYSTIEKRIKEKPEGSYVVKLTTNDKKTAVNKICEKIGEEAAETILAAKDNDKSEIIYESADLIFHTFVLLAKFGISYEELNEEFKKRMK.

The protein belongs to the PRA-PH family.

Its subcellular location is the cytoplasm. The catalysed reaction is 1-(5-phospho-beta-D-ribosyl)-ATP + H2O = 1-(5-phospho-beta-D-ribosyl)-5'-AMP + diphosphate + H(+). It participates in amino-acid biosynthesis; L-histidine biosynthesis; L-histidine from 5-phospho-alpha-D-ribose 1-diphosphate: step 2/9. The chain is Phosphoribosyl-ATP pyrophosphatase from Methanococcus vannielii (strain ATCC 35089 / DSM 1224 / JCM 13029 / OCM 148 / SB).